The following is a 138-amino-acid chain: Large ribosomal subunit protein uL16 (138 aa).

Belongs to the universal ribosomal protein uL16 family. In terms of assembly, part of the 50S ribosomal subunit.

In terms of biological role, binds 23S rRNA and is also seen to make contacts with the A and possibly P site tRNAs. The polypeptide is Large ribosomal subunit protein uL16 (Chlamydia trachomatis serovar D (strain ATCC VR-885 / DSM 19411 / UW-3/Cx)).